Here is a 358-residue protein sequence, read N- to C-terminus: Peptide chain release factor 1 (358 aa).

Gln233 carries the N5-methylglutamine modification. Over residues 282–306 (QRAASERSADRRGQVGSGDRSERVR) the composition is skewed to basic and acidic residues. Positions 282-308 (QRAASERSADRRGQVGSGDRSERVRTY) are disordered.

This sequence belongs to the prokaryotic/mitochondrial release factor family. Methylated by PrmC. Methylation increases the termination efficiency of RF1.

The protein localises to the cytoplasm. In terms of biological role, peptide chain release factor 1 directs the termination of translation in response to the peptide chain termination codons UAG and UAA. This is Peptide chain release factor 1 from Afipia carboxidovorans (strain ATCC 49405 / DSM 1227 / KCTC 32145 / OM5) (Oligotropha carboxidovorans).